The primary structure comprises 301 residues: Cilia- and flagella-associated protein 161 (301 aa).

The disordered stretch occupies residues 269–301; that stretch reads GNPRDASSSMLDLPKPPTEDTRAMEQAMGLDTQ.

Microtubule inner protein component of sperm flagellar doublet microtubules. Expressed in airway epithelial cells.

The protein resides in the cytoplasm. It localises to the cytoskeleton. It is found in the cilium axoneme. Its subcellular location is the flagellum axoneme. In terms of biological role, microtubule inner protein (MIP) part of the dynein-decorated doublet microtubules (DMTs) in cilia axoneme, which is required for motile cilia beating. This Homo sapiens (Human) protein is Cilia- and flagella-associated protein 161.